Consider the following 306-residue polypeptide: Aspartate carbamoyltransferase catalytic subunit (306 aa).

R56 and T57 together coordinate carbamoyl phosphate. K84 provides a ligand contact to L-aspartate. Carbamoyl phosphate contacts are provided by R106, H136, and Q139. R169 and R221 together coordinate L-aspartate. Carbamoyl phosphate contacts are provided by A262 and P263.

Belongs to the aspartate/ornithine carbamoyltransferase superfamily. ATCase family. In terms of assembly, heterododecamer (2C3:3R2) of six catalytic PyrB chains organized as two trimers (C3), and six regulatory PyrI chains organized as three dimers (R2).

It carries out the reaction carbamoyl phosphate + L-aspartate = N-carbamoyl-L-aspartate + phosphate + H(+). The protein operates within pyrimidine metabolism; UMP biosynthesis via de novo pathway; (S)-dihydroorotate from bicarbonate: step 2/3. Catalyzes the condensation of carbamoyl phosphate and aspartate to form carbamoyl aspartate and inorganic phosphate, the committed step in the de novo pyrimidine nucleotide biosynthesis pathway. In Streptococcus gordonii (strain Challis / ATCC 35105 / BCRC 15272 / CH1 / DL1 / V288), this protein is Aspartate carbamoyltransferase catalytic subunit.